Consider the following 142-residue polypeptide: ATP synthase epsilon chain (142 aa).

Belongs to the ATPase epsilon chain family. As to quaternary structure, F-type ATPases have 2 components, CF(1) - the catalytic core - and CF(0) - the membrane proton channel. CF(1) has five subunits: alpha(3), beta(3), gamma(1), delta(1), epsilon(1). CF(0) has three main subunits: a, b and c.

The protein resides in the cell inner membrane. Its function is as follows. Produces ATP from ADP in the presence of a proton gradient across the membrane. This chain is ATP synthase epsilon chain, found in Shewanella putrefaciens (strain CN-32 / ATCC BAA-453).